The following is a 362-amino-acid chain: Protein-glutamate methylesterase/protein-glutamine glutaminase 1 (362 aa).

The region spanning 10–127 (RVLVVDDSSF…ADAQRVFREE (118 aa)) is the Response regulatory domain. A 4-aspartylphosphate modification is found at Asp61. The 195-residue stretch at 163 to 357 (PRPSQALAGK…LPLTQIGSEI (195 aa)) folds into the CheB-type methylesterase domain. Active-site residues include Ser181, His208, and Asp306.

Belongs to the CheB family. In terms of processing, phosphorylated by CheA. Phosphorylation of the N-terminal regulatory domain activates the methylesterase activity.

Its subcellular location is the cytoplasm. The enzyme catalyses [protein]-L-glutamate 5-O-methyl ester + H2O = L-glutamyl-[protein] + methanol + H(+). It catalyses the reaction L-glutaminyl-[protein] + H2O = L-glutamyl-[protein] + NH4(+). Its function is as follows. Involved in chemotaxis. Part of a chemotaxis signal transduction system that modulates chemotaxis in response to various stimuli. Catalyzes the demethylation of specific methylglutamate residues introduced into the chemoreceptors (methyl-accepting chemotaxis proteins or MCP) by CheR. Also mediates the irreversible deamidation of specific glutamine residues to glutamic acid. The protein is Protein-glutamate methylesterase/protein-glutamine glutaminase 1 of Geobacter sulfurreducens (strain ATCC 51573 / DSM 12127 / PCA).